The following is a 182-amino-acid chain: Constitutive photomorphogenesis protein 10 (182 aa).

The 147-residue stretch at 36 to 182 folds into the UBC core domain; sequence ASGKRIQREM…AKEWTLRFAK (147 aa).

It belongs to the ubiquitin-conjugating enzyme family. Component of the CDD complex, at least composed of COP10, DET1 and DDB1A. Interacts with E3 ubiquitin ligase COP1. Interacts with E2 ubiquitin conjugating UBC5. Interacts with CSN3, CSN4 and CSN8 subunits of the COP9 complex. As to expression, expressed in flower, leaf, stem and seedling. Expressed at lower level in root.

It is found in the nucleus. Functionally, component of light signal transduction machinery. Involved in repression of photomorphogenesis in darkness by participating in the CDD complex, a complex probably required to regulate the activity of ubiquitin conjugating enzymes (E2s). Repression of photomorphogenesis is probably mediated by ubiquitination and subsequent degradation of photomorphogenesis-promoting factors such as HY5, HYH and LAF1. Although strongly related to ubiquitin-conjugating enzyme, it has no catalytic activity by itself due to the absence of the conserved Cys active site at position 120. It can however enhance the activity of E2 conjugating enzymes. This Arabidopsis thaliana (Mouse-ear cress) protein is Constitutive photomorphogenesis protein 10 (COP10).